The sequence spans 107 residues: Urease subunit beta (107 aa).

It belongs to the urease beta subunit family. Heterotrimer of UreA (gamma), UreB (beta) and UreC (alpha) subunits. Three heterotrimers associate to form the active enzyme.

The protein resides in the cytoplasm. The enzyme catalyses urea + 2 H2O + H(+) = hydrogencarbonate + 2 NH4(+). It functions in the pathway nitrogen metabolism; urea degradation; CO(2) and NH(3) from urea (urease route): step 1/1. The chain is Urease subunit beta from Teredinibacter turnerae (strain ATCC 39867 / T7901).